The chain runs to 360 residues: Ribosomal RNA large subunit methyltransferase M (360 aa).

S-adenosyl-L-methionine-binding positions include S187, 220–223 (CPGG), D239, D259, and D276. K305 functions as the Proton acceptor in the catalytic mechanism.

Belongs to the class I-like SAM-binding methyltransferase superfamily. RNA methyltransferase RlmE family. RlmM subfamily. As to quaternary structure, monomer.

The protein resides in the cytoplasm. The catalysed reaction is cytidine(2498) in 23S rRNA + S-adenosyl-L-methionine = 2'-O-methylcytidine(2498) in 23S rRNA + S-adenosyl-L-homocysteine + H(+). Catalyzes the 2'-O-methylation at nucleotide C2498 in 23S rRNA. In Shewanella pealeana (strain ATCC 700345 / ANG-SQ1), this protein is Ribosomal RNA large subunit methyltransferase M.